A 527-amino-acid chain; its full sequence is Succinate-semialdehyde dehydrogenase, mitochondrial (527 aa).

The transit peptide at 1 to 35 directs the protein to the mitochondrion; the sequence is MAMAMAMRRAAALGARHILAASSTSSSGVLLRRHM. NAD(+) is bound by residues R208, 223–226, and 276–281; these read KPSE and GSTAVG. R208 contacts substrate. Catalysis depends on E298, which acts as the Proton acceptor. The substrate site is built by R326, C332, and S489. C332 functions as the Nucleophile in the catalytic mechanism. C332 and C334 are oxidised to a cystine.

It belongs to the aldehyde dehydrogenase family. As to quaternary structure, homotetramer.

The protein localises to the mitochondrion matrix. It catalyses the reaction succinate semialdehyde + NAD(+) + H2O = succinate + NADH + 2 H(+). Its pathway is amino-acid degradation; 4-aminobutanoate degradation. Redox-regulated. Inhibited under oxydizing conditions. In terms of biological role, oxidizes specifically succinate semialdehyde. Involved in plant response to environmental stress by preventing the accumulation of reactive oxygen species. This Oryza sativa subsp. japonica (Rice) protein is Succinate-semialdehyde dehydrogenase, mitochondrial (ALDH5F1).